Consider the following 226-residue polypeptide: Probable functional amyloid protease FapD (226 aa).

An N-terminal signal peptide occupies residues 1–18 (MRRATLCLLLLLAGPSWA). In terms of domain architecture, Peptidase C39 spans 50 to 180 (QKTDFSCGAA…AGWNGIVFAV (131 aa)). Cys56 is a catalytic residue.

It belongs to the FapD family.

Its subcellular location is the periplasm. Probable cysteine protease that is involved in processing fibril precursors. Upon overexpression of the endogenous six-gene locus (fapA-fapF) in situ, cells form large clumps during liquid growth, make large amounts of biofilm and produce amyloid fibrils. Expression of the 6 gene operon in E.coli strain BL21(DE3) induces flocculation and biofilm formation with copious extracellular fibrils. The sequence is that of Probable functional amyloid protease FapD from Pseudomonas fluorescens.